We begin with the raw amino-acid sequence, 190 residues long: uncharacterized protein (190 aa).

A helical transmembrane segment spans residues 1 to 21 (MLVMSITFSFVAVALLVYFYV). Positions 103-114 (REEVCARPEHRS) are enriched in basic and acidic residues. A disordered region spans residues 103–130 (REEVCARPEHRSAPSRAGSSAAKPTPTK).

It to B.burgdorferi BB0265.

It is found in the membrane. This is an uncharacterized protein from Treponema pallidum (strain Nichols).